The chain runs to 209 residues: Octanoyltransferase (209 aa).

A BPL/LPL catalytic domain is found at 30–209 (DHEPEIIYLV…IQTEFNKIFK (180 aa)). Substrate is bound by residues 69–76 (RGGKFTFH), 143–145 (AIG), and 156–158 (GVA). C174 acts as the Acyl-thioester intermediate in catalysis.

The protein belongs to the LipB family.

The protein localises to the cytoplasm. The catalysed reaction is octanoyl-[ACP] + L-lysyl-[protein] = N(6)-octanoyl-L-lysyl-[protein] + holo-[ACP] + H(+). Its pathway is protein modification; protein lipoylation via endogenous pathway; protein N(6)-(lipoyl)lysine from octanoyl-[acyl-carrier-protein]: step 1/2. Functionally, catalyzes the transfer of endogenously produced octanoic acid from octanoyl-acyl-carrier-protein onto the lipoyl domains of lipoate-dependent enzymes. Lipoyl-ACP can also act as a substrate although octanoyl-ACP is likely to be the physiological substrate. The polypeptide is Octanoyltransferase (Rickettsia rickettsii (strain Iowa)).